A 277-amino-acid polypeptide reads, in one-letter code: Ribonuclease HII (277 aa).

The segment at 1 to 32 (MIRNQANKPGRAKAATAARKSPLTKSAAKPAA) is disordered. Residues 20–32 (KSPLTKSAAKPAA) show a composition bias toward low complexity. One can recognise an RNase H type-2 domain in the interval 64–252 (WPVAGCDEAG…VVAARRKHQP (189 aa)). 3 residues coordinate a divalent metal cation: D70, E71, and D161.

The protein belongs to the RNase HII family. It depends on Mn(2+) as a cofactor. Requires Mg(2+) as cofactor.

It is found in the cytoplasm. The enzyme catalyses Endonucleolytic cleavage to 5'-phosphomonoester.. Endonuclease that specifically degrades the RNA of RNA-DNA hybrids. This Bradyrhizobium sp. (strain ORS 278) protein is Ribonuclease HII.